The primary structure comprises 604 residues: Glutamine--fructose-6-phosphate aminotransferase [isomerizing] (604 aa).

The Nucleophile; for GATase activity role is filled by cysteine 2. One can recognise a Glutamine amidotransferase type-2 domain in the interval 2-219 (CGIMGAVSER…EGDSACVTTQ (218 aa)). 2 consecutive SIS domains span residues 279-427 (LRAS…DNRA) and 454-594 (LASL…VDQP). The active-site For Fru-6P isomerization activity is the lysine 599.

In terms of assembly, homodimer.

It localises to the cytoplasm. The catalysed reaction is D-fructose 6-phosphate + L-glutamine = D-glucosamine 6-phosphate + L-glutamate. Its function is as follows. Catalyzes the first step in hexosamine metabolism, converting fructose-6P into glucosamine-6P using glutamine as a nitrogen source. The polypeptide is Glutamine--fructose-6-phosphate aminotransferase [isomerizing] (Legionella pneumophila subsp. pneumophila (strain Philadelphia 1 / ATCC 33152 / DSM 7513)).